A 65-amino-acid chain; its full sequence is MPKIKTNRGAAKRFRKSASGRVKRGNAFTSHILTHKTRKNKRNLRGTSMVSDVDQKNISRLIPYK.

The segment at 1–51 (MPKIKTNRGAAKRFRKSASGRVKRGNAFTSHILTHKTRKNKRNLRGTSMVS) is disordered. Basic residues-rich tracts occupy residues 10–24 (AAKRFRKSASGRVKR) and 33–44 (LTHKTRKNKRNL).

This sequence belongs to the bacterial ribosomal protein bL35 family.

This is Large ribosomal subunit protein bL35 from Pelobacter propionicus (strain DSM 2379 / NBRC 103807 / OttBd1).